The primary structure comprises 211 residues: ATP-dependent Clp protease proteolytic subunit 2 (211 aa).

S106 serves as the catalytic Nucleophile. The active site involves H131.

The protein belongs to the peptidase S14 family. In terms of assembly, fourteen ClpP subunits assemble into 2 heptameric rings which stack back to back to give a disk-like structure with a central cavity, resembling the structure of eukaryotic proteasomes.

The protein localises to the cytoplasm. It catalyses the reaction Hydrolysis of proteins to small peptides in the presence of ATP and magnesium. alpha-casein is the usual test substrate. In the absence of ATP, only oligopeptides shorter than five residues are hydrolyzed (such as succinyl-Leu-Tyr-|-NHMec, and Leu-Tyr-Leu-|-Tyr-Trp, in which cleavage of the -Tyr-|-Leu- and -Tyr-|-Trp bonds also occurs).. Its function is as follows. Cleaves peptides in various proteins in a process that requires ATP hydrolysis. Has a chymotrypsin-like activity. Plays a major role in the degradation of misfolded proteins. This is ATP-dependent Clp protease proteolytic subunit 2 from Bradyrhizobium diazoefficiens (strain JCM 10833 / BCRC 13528 / IAM 13628 / NBRC 14792 / USDA 110).